A 173-amino-acid chain; its full sequence is Ribosome maturation factor RimM (173 aa).

A PRC barrel domain is found at 90–169 (EDEYFWFDIL…RIDTKGAQDI (80 aa)).

This sequence belongs to the RimM family. Binds ribosomal protein uS19.

The protein resides in the cytoplasm. In terms of biological role, an accessory protein needed during the final step in the assembly of 30S ribosomal subunit, possibly for assembly of the head region. Essential for efficient processing of 16S rRNA. May be needed both before and after RbfA during the maturation of 16S rRNA. It has affinity for free ribosomal 30S subunits but not for 70S ribosomes. This Nitratiruptor sp. (strain SB155-2) protein is Ribosome maturation factor RimM.